A 469-amino-acid chain; its full sequence is MAFFRTVTKLRSRLGQPPSLRDSVRCLQTQASSDLDLHSQLKELIPEQQERLKKLKKEHGKVQLGTITVDMVIGGMRGMTGLLWETSLLDPDEGIRFRGLSIPECQKVLPGATPGGEPLPEGLLWLLLTGKVPSRSKNMHYPVNNGVVPKFQIMCSRPLMLCLLEHIPMTQFTTGVMALQVQSEFQKAYDKGIPKSRYWEPTYEDSLSLIAQLPVVASYVYRRIYKGGRMIPVDDSLDYGGNFSHLLGFDDHKMQELMRLYVTIHSDHEGGNVSAHTGHLVASALSDPFLSFAAALNGLAGPLHGLANQEVLLWIKSVVDECGENITKDQLKDYVWKTLNSGKVVPGFGHGVLRKTDPRYTCQREFALKHLPDDPLFRLVSKLYDVVPPILTELGKVKNPWPNVDAHSGVLLNHFGLTEARYFTVLFGVSRSIGIGSQLIWDRALGLPLERPKSVTMESLESFCKKAAS.

A mitochondrion-targeting transit peptide spans 1 to 28; that stretch reads MAFFRTVTKLRSRLGQPPSLRDSVRCLQ. Active-site residues include His-304, His-350, and Asp-405.

This sequence belongs to the citrate synthase family. Homodimer.

It localises to the mitochondrion matrix. The enzyme catalyses oxaloacetate + acetyl-CoA + H2O = citrate + CoA + H(+). The protein operates within carbohydrate metabolism; tricarboxylic acid cycle; isocitrate from oxaloacetate: step 1/2. The polypeptide is Citrate synthase, mitochondrial (MCSI) (Fragaria ananassa (Strawberry)).